A 572-amino-acid chain; its full sequence is DnaJ protein ERDJ3A (572 aa).

An N-terminal signal peptide occupies residues 1 to 23 (MVRTRLAISVVLVSTLLLLNVKA). The J domain occupies 27–91 (DPYKVLGVSK…EKRKNYDLYG (65 aa)). Residues 394-423 (ITVKNLKSAVQELGKLLEGLEKKNKKVSSK) adopt a coiled-coil conformation. Positions 419-439 (KVSSKSQAGQAPNESSEKIPL) are disordered. The segment covering 422-432 (SKSQAGQAPNE) has biased composition (polar residues). Residue asparagine 431 is glycosylated (N-linked (GlcNAc...) asparagine).

In terms of assembly, interacts with BIP1 and BIP3. The interaction with BIP1 and BIP3 activates the ATPase enzyme activities of BIP1 and BIP3. Not N-glycosylated. As to expression, expressed in roots, leaves, stems, flowers, mature pollen grains and growing pollen tubes.

Its subcellular location is the endoplasmic reticulum lumen. Functionally, regulates protein folding in the endoplasmic reticulum (ER) lumen. Functions probably as a co-molecular chaperone that is required for normal growth of pollen tubes under high-temperature stress. The sequence is that of DnaJ protein ERDJ3A (ERDJ3A) from Arabidopsis thaliana (Mouse-ear cress).